The sequence spans 155 residues: MLP-like protein 423 (155 aa).

It belongs to the MLP family.

This Arabidopsis thaliana (Mouse-ear cress) protein is MLP-like protein 423 (MLP423).